The following is a 361-amino-acid chain: Probable purine permease 13 (361 aa).

10 helical membrane-spanning segments follow: residues 35–55 (WILV…AVLL), 68–88 (WIST…LCFL), 103–123 (LVWI…LYSF), 129–151 (SAST…SYYI), 156–176 (ITCL…LVSL), 192–212 (LIGC…LSLM), 238–258 (VASC…LLSV), 268–288 (VIYV…SVGA), 289–309 (VALI…LSLI), and 323–343 (LTEV…FYIY).

This sequence belongs to the purine permeases (TC 2.A.7.14) family.

It is found in the membrane. This is Probable purine permease 13 (PUP13) from Arabidopsis thaliana (Mouse-ear cress).